A 118-amino-acid chain; its full sequence is Ribosome-binding factor A (118 aa).

Belongs to the RbfA family. Monomer. Binds 30S ribosomal subunits, but not 50S ribosomal subunits or 70S ribosomes.

Its subcellular location is the cytoplasm. Functionally, one of several proteins that assist in the late maturation steps of the functional core of the 30S ribosomal subunit. Associates with free 30S ribosomal subunits (but not with 30S subunits that are part of 70S ribosomes or polysomes). Required for efficient processing of 16S rRNA. May interact with the 5'-terminal helix region of 16S rRNA. This chain is Ribosome-binding factor A, found in Bacillus thuringiensis (strain Al Hakam).